Here is a 206-residue protein sequence, read N- to C-terminus: dTTP/UTP pyrophosphatase (206 aa).

Catalysis depends on aspartate 87, which acts as the Proton acceptor.

Belongs to the Maf family. YhdE subfamily. A divalent metal cation serves as cofactor.

The protein resides in the cytoplasm. The enzyme catalyses dTTP + H2O = dTMP + diphosphate + H(+). The catalysed reaction is UTP + H2O = UMP + diphosphate + H(+). Its function is as follows. Nucleoside triphosphate pyrophosphatase that hydrolyzes dTTP and UTP. May have a dual role in cell division arrest and in preventing the incorporation of modified nucleotides into cellular nucleic acids. The sequence is that of dTTP/UTP pyrophosphatase from Aromatoleum aromaticum (strain DSM 19018 / LMG 30748 / EbN1) (Azoarcus sp. (strain EbN1)).